The sequence spans 292 residues: MNPFWNMSSAAVRKRSDNDEKIATGDQKISPPRSSSAKKQLPSIPKNAVPITKPISPSPSVQPTNGTHASYGPFYLEYSLLAEFTLVVKQKLPGVYVQPSYRSALMWFGVIFIRHGLYQDGVFKFTVYIPDNYPDGECPRLVFDVPVFHPLVDPVSGELDVKRAFTKWRRNHNHIWQVLMYARRIFYKIDTTSPLNPEAAVLYEKDVQLFKSKVVDSVKLCNSHLFDQPKIEDPYAIIFSPWNPVLHDDARERMLAQKKSEEQSKGLHVSGLSWVKPGSVLPFSKEENSLQT.

The segment at M1–T64 is disordered. A compositionally biased stretch (basic and acidic residues) spans K14–A23. The UBC core domain maps to Y75–S223. Positions S273 to T292 are disordered.

The protein belongs to the ubiquitin-conjugating enzyme family. FTS subfamily.

The protein resides in the cytoplasm. The protein localises to the cell membrane. In terms of biological role, may function to promote vesicle trafficking and/or fusion. May also regulate apoptosis. The sequence is that of AKT-interacting protein (aktip) from Xenopus tropicalis (Western clawed frog).